We begin with the raw amino-acid sequence, 439 residues long: Xaa-Pro dipeptidase (439 aa).

Mn(2+) is bound by residues Asp-244, Asp-255, His-335, Glu-380, and Glu-419.

It belongs to the peptidase M24B family. Bacterial-type prolidase subfamily. Requires Mn(2+) as cofactor.

It carries out the reaction Xaa-L-Pro dipeptide + H2O = an L-alpha-amino acid + L-proline. In terms of biological role, splits dipeptides with a prolyl residue in the C-terminal position. The sequence is that of Xaa-Pro dipeptidase from Shewanella oneidensis (strain ATCC 700550 / JCM 31522 / CIP 106686 / LMG 19005 / NCIMB 14063 / MR-1).